The chain runs to 88 residues: Small ribosomal subunit protein uS17 (88 aa).

The protein belongs to the universal ribosomal protein uS17 family. As to quaternary structure, part of the 30S ribosomal subunit.

In terms of biological role, one of the primary rRNA binding proteins, it binds specifically to the 5'-end of 16S ribosomal RNA. The polypeptide is Small ribosomal subunit protein uS17 (Xylella fastidiosa (strain M23)).